The chain runs to 184 residues: Thymidine kinase (184 aa).

ATP is bound by residues 10-17 and 83-86; these read GPMYSGKT and DEVQ. Glu84 functions as the Proton acceptor in the catalytic mechanism. Residues Cys140, Cys143, Cys173, and Cys176 each contribute to the Zn(2+) site.

It belongs to the thymidine kinase family. As to quaternary structure, homotetramer.

The protein localises to the cytoplasm. It carries out the reaction thymidine + ATP = dTMP + ADP + H(+). This chain is Thymidine kinase, found in Thermotoga sp. (strain RQ2).